A 498-amino-acid chain; its full sequence is Protein flp (498 aa).

Transmembrane regions (helical) follow at residues 6-26, 389-409, 433-453, and 471-491; these read LYFL…IHIT, FNIV…FSAY, LTLC…YLIL, and LALI…LLFL.

It localises to the cell membrane. In terms of biological role, its precise function is unknown. Has no penicillin-binding activity and is not involved in methicillin resistance. This is Protein flp (flp) from Staphylococcus aureus (strain MW2).